The primary structure comprises 1343 residues: DNA-directed RNA polymerase subunit beta (1343 aa).

This sequence belongs to the RNA polymerase beta chain family. As to quaternary structure, the RNAP catalytic core consists of 2 alpha, 1 beta, 1 beta' and 1 omega subunit. When a sigma factor is associated with the core the holoenzyme is formed, which can initiate transcription.

It catalyses the reaction RNA(n) + a ribonucleoside 5'-triphosphate = RNA(n+1) + diphosphate. DNA-dependent RNA polymerase catalyzes the transcription of DNA into RNA using the four ribonucleoside triphosphates as substrates. This chain is DNA-directed RNA polymerase subunit beta, found in Haemophilus influenzae (strain ATCC 51907 / DSM 11121 / KW20 / Rd).